Consider the following 367-residue polypeptide: Pre-small/secreted glycoprotein (367 aa).

The first 33 residues, 1-33 (MGSGYQLLQLPRERFRKTSFLVWVIILFQRAIS), serve as a signal peptide directing secretion. An N-linked (GlcNAc...) asparagine; by host glycan is attached at N41. 2 disulfides stabilise this stretch: C109–C136 and C122–C148. N-linked (GlcNAc...) asparagine; by host glycans are attached at residues N205, N239, N258, and N269.

It belongs to the filoviruses glycoprotein family. As to quaternary structure, homodimer; disulfide-linked. The homodimers are linked by two disulfide bonds in a parallel orientation. In terms of assembly, monomer. In terms of processing, this precursor is processed into mature sGP and delta-peptide by host furin or furin-like proteases. The cleavage site corresponds to the furin optimal cleavage sequence [KR]-X-[KR]-R. N-glycosylated. Post-translationally, O-glycosylated.

The protein localises to the secreted. Its function is as follows. Seems to possess an anti-inflammatory activity as it can reverse the barrier-decreasing effects of TNF alpha. Might therefore contribute to the lack of inflammatory reaction seen during infection in spite the of extensive necrosis and massive virus production. Does not seem to be involved in activation of primary macrophages. Does not seem to interact specifically with neutrophils. In terms of biological role, viroporin that permeabilizes mammalian cell plasma membranes. It acts by altering permeation of ionic compounds and small molecules. This activity may lead to viral enterotoxic activity. In Reston ebolavirus (strain Siena/Philippine-92) (REBOV), this protein is Pre-small/secreted glycoprotein (GP).